The primary structure comprises 367 residues: Porin Omp2a (367 aa).

An N-terminal signal peptide occupies residues 1 to 22 (MNIKSLLLGSAAALVAASGAQA).

This sequence belongs to the alphaproteobacteria porin family. Monomer.

The protein localises to the cell outer membrane. Its function is as follows. Forms passive diffusion pores that allow small molecular weight hydrophilic materials across the outer membrane. The chain is Porin Omp2a (omp2a) from Brucella melitensis biotype 1 (strain ATCC 23456 / CCUG 17765 / NCTC 10094 / 16M).